Consider the following 323-residue polypeptide: METPFYHDDVLSGLGSGFAPTSGSSGLLLPFPGGSMMKKDALGLALPEQVAAALKAPGAAAAAAAAAGGEATAGLLGSPEMGMLKLSSPELERLIIQSNGLVTTTPTSGQFLYPKAAASEEQEFAEGFVKALEDLHKQNQLGGGGGPNGGAAAAGGGGGGGGGGGGELPAPGLAPEPPVYANLSTYPAVSYAAEPGPFAAPPPRLPPPPPPPLKDEPQIVPEVPSFGESPPLSPIDMDTQERIKAERKRLRNRIAASKCRKRKLERISRLEEKVKSLKSQNTELASTASLLREQVAQLKQKVLSHVNSGCQLLPQHQHQVPAY.

Disordered regions lie at residues 138–173 and 197–221; these read QNQL…APGL and PFAA…QIVP. Residues 141–167 show a composition bias toward gly residues; that stretch reads LGGGGGPNGGAAAAGGGGGGGGGGGGE. Positions 198 to 212 are enriched in pro residues; it reads FAAPPPRLPPPPPPP. The interval 242 to 269 is basic motif; that stretch reads RIKAERKRLRNRIAASKCRKRKLERISR. One can recognise a bZIP domain in the interval 242 to 305; sequence RIKAERKRLR…AQLKQKVLSH (64 aa). Positions 270 to 298 are leucine-zipper; the sequence is LEEKVKSLKSQNTELASTASLLREQVAQL.

Belongs to the bZIP family. Jun subfamily. Binds DNA as a dimer.

The protein resides in the nucleus. The sequence is that of Transcription factor JunD (JUND) from Gallus gallus (Chicken).